The sequence spans 427 residues: Glutamate-1-semialdehyde 2,1-aminomutase (427 aa).

Lysine 265 carries the post-translational modification N6-(pyridoxal phosphate)lysine.

This sequence belongs to the class-III pyridoxal-phosphate-dependent aminotransferase family. HemL subfamily. Homodimer. Pyridoxal 5'-phosphate is required as a cofactor.

Its subcellular location is the cytoplasm. It catalyses the reaction (S)-4-amino-5-oxopentanoate = 5-aminolevulinate. The protein operates within porphyrin-containing compound metabolism; protoporphyrin-IX biosynthesis; 5-aminolevulinate from L-glutamyl-tRNA(Glu): step 2/2. This Burkholderia thailandensis (strain ATCC 700388 / DSM 13276 / CCUG 48851 / CIP 106301 / E264) protein is Glutamate-1-semialdehyde 2,1-aminomutase.